An 88-amino-acid polypeptide reads, in one-letter code: Large ribosomal subunit protein bL27 (88 aa).

The tract at residues Met-1–Lys-24 is disordered.

Belongs to the bacterial ribosomal protein bL27 family.

This chain is Large ribosomal subunit protein bL27, found in Prochlorococcus marinus (strain MIT 9303).